Consider the following 397-residue polypeptide: DNA-directed RNA polymerase subunit Rpo1C (397 aa).

Belongs to the RNA polymerase beta' chain family. In terms of assembly, part of the RNA polymerase complex.

The protein localises to the cytoplasm. It carries out the reaction RNA(n) + a ribonucleoside 5'-triphosphate = RNA(n+1) + diphosphate. In terms of biological role, DNA-dependent RNA polymerase (RNAP) catalyzes the transcription of DNA into RNA using the four ribonucleoside triphosphates as substrates. Forms part of the jaw domain. This chain is DNA-directed RNA polymerase subunit Rpo1C, found in Methanosarcina acetivorans (strain ATCC 35395 / DSM 2834 / JCM 12185 / C2A).